A 187-amino-acid chain; its full sequence is Elongation factor P (187 aa).

This sequence belongs to the elongation factor P family.

The protein resides in the cytoplasm. It participates in protein biosynthesis; polypeptide chain elongation. Its function is as follows. Involved in peptide bond synthesis. Stimulates efficient translation and peptide-bond synthesis on native or reconstituted 70S ribosomes in vitro. Probably functions indirectly by altering the affinity of the ribosome for aminoacyl-tRNA, thus increasing their reactivity as acceptors for peptidyl transferase. In Sphingopyxis alaskensis (strain DSM 13593 / LMG 18877 / RB2256) (Sphingomonas alaskensis), this protein is Elongation factor P.